We begin with the raw amino-acid sequence, 665 residues long: Macrolide export ATP-binding/permease protein MacB (665 aa).

The region spanning 17–255 (MQVKGLIREF…AAQPASIIDK (239 aa)) is the ABC transporter domain. 53–60 (GQSGSGKS) contacts ATP. 4 helical membrane-spanning segments follow: residues 287-307 (LLTM…VGLG), 544-564 (IAII…LVSV), 588-608 (FLIE…GLAF), and 630-650 (SIIA…FLPA).

It belongs to the ABC transporter superfamily. Macrolide exporter (TC 3.A.1.122) family. As to quaternary structure, homodimer. Part of the tripartite efflux system MacAB-TolC, which is composed of an inner membrane transporter, MacB, a periplasmic membrane fusion protein, MacA, and an outer membrane component, TolC. The complex forms a large protein conduit and can translocate molecules across both the inner and outer membranes. Interacts with MacA.

It is found in the cell inner membrane. Functionally, part of the tripartite efflux system MacAB-TolC. MacB is a non-canonical ABC transporter that contains transmembrane domains (TMD), which form a pore in the inner membrane, and an ATP-binding domain (NBD), which is responsible for energy generation. Confers resistance against macrolides. This Psychrobacter cryohalolentis (strain ATCC BAA-1226 / DSM 17306 / VKM B-2378 / K5) protein is Macrolide export ATP-binding/permease protein MacB.